The sequence spans 363 residues: Spermidine/putrescine import ATP-binding protein PotA (363 aa).

In terms of domain architecture, ABC transporter spans 9 to 239; that stretch reads IDVRNAVKRY…PANRFVADFI (231 aa). 41–48 is an ATP binding site; sequence GPSGCGKT.

The protein belongs to the ABC transporter superfamily. Spermidine/putrescine importer (TC 3.A.1.11.1) family. In terms of assembly, the complex is composed of two ATP-binding proteins (PotA), two transmembrane proteins (PotB and PotC) and a solute-binding protein (PotD).

It localises to the cell inner membrane. The enzyme catalyses ATP + H2O + polyamine-[polyamine-binding protein]Side 1 = ADP + phosphate + polyamineSide 2 + [polyamine-binding protein]Side 1.. Its function is as follows. Part of the ABC transporter complex PotABCD involved in spermidine/putrescine import. Responsible for energy coupling to the transport system. This Roseobacter denitrificans (strain ATCC 33942 / OCh 114) (Erythrobacter sp. (strain OCh 114)) protein is Spermidine/putrescine import ATP-binding protein PotA.